The following is a 121-amino-acid chain: Large ribosomal subunit protein bL31 (121 aa).

The segment at 1 to 97 (MKEGIHPDYK…AKENRAAKRA (97 aa)) is large ribosomal subunit protein bL31. 4 residues coordinate Zn(2+): Cys16, Cys18, Cys36, and Cys39. The span at 65-80 (ATPAKAEPAKKAPAAE) shows a compositional bias: low complexity. Positions 65-121 (ATPAKAEPAKKAPAAEPAKKVEAAKENRAAKRAKAGKSKKSEAAPAAEAPAADAKPE) are disordered. The segment at 74–121 (KKAPAAEPAKKVEAAKENRAAKRAKAGKSKKSEAAPAAEAPAADAKPE) is unknown. Residues 81 to 93 (PAKKVEAAKENRA) show a composition bias toward basic and acidic residues. Positions 107 to 121 (AAPAAEAPAADAKPE) are enriched in low complexity.

It belongs to the bacterial ribosomal protein bL31 family. Type A subfamily. In terms of assembly, part of the 50S ribosomal subunit. The cofactor is Zn(2+).

Functionally, binds the 23S rRNA. The sequence is that of Large ribosomal subunit protein bL31 from Anaeromyxobacter dehalogenans (strain 2CP-C).